The following is a 990-amino-acid chain: DNA polymerase (990 aa).

A disordered region spans residues 936–976 (PSDDAARKRARAGPSALRKQKAASNDEDSSDEDDEDCSQAI). Acidic residues predominate over residues 960–972 (NDEDSSDEDDEDC).

This sequence belongs to the DNA polymerase type-B family.

The catalysed reaction is DNA(n) + a 2'-deoxyribonucleoside 5'-triphosphate = DNA(n+1) + diphosphate. Functionally, replicates the viral genome, host DNA polymerases cannot substitute for the viral enzyme in this process. This Choristoneura fumiferana (Spruce budworm moth) protein is DNA polymerase (POL).